A 378-amino-acid chain; its full sequence is Chorismate synthase (378 aa).

Residues 42-61 (IQAELDRRRPGQSPITTPRQ) are disordered. An NADP(+)-binding site is contributed by R49. FMN is bound by residues 126–128 (RAS), G287, 302–306 (KPTAT), and R328.

This sequence belongs to the chorismate synthase family. Homotetramer. FMNH2 serves as cofactor.

The enzyme catalyses 5-O-(1-carboxyvinyl)-3-phosphoshikimate = chorismate + phosphate. Its pathway is metabolic intermediate biosynthesis; chorismate biosynthesis; chorismate from D-erythrose 4-phosphate and phosphoenolpyruvate: step 7/7. Functionally, catalyzes the anti-1,4-elimination of the C-3 phosphate and the C-6 proR hydrogen from 5-enolpyruvylshikimate-3-phosphate (EPSP) to yield chorismate, which is the branch point compound that serves as the starting substrate for the three terminal pathways of aromatic amino acid biosynthesis. This reaction introduces a second double bond into the aromatic ring system. The polypeptide is Chorismate synthase (Synechococcus sp. (strain JA-2-3B'a(2-13)) (Cyanobacteria bacterium Yellowstone B-Prime)).